Consider the following 941-residue polypeptide: Gamma-aminobutyric acid type B receptor subunit 2 (941 aa).

The first 41 residues, 1 to 41 (MASPRSSGQPGPPPPPPPPPARLLLLLLLPLLLPLAPGAWG), serve as a signal peptide directing secretion. The Extracellular segment spans residues 42–483 (WARGAPRPPP…LRKISLPLYS (442 aa)). Residue Asn90 is glycosylated (N-linked (GlcNAc...) asparagine). Intrachain disulfides connect Cys108-Cys135, Cys237-Cys266, and Cys265-Cys302. Asn298, Asn389, Asn404, and Asn453 each carry an N-linked (GlcNAc...) asparagine glycan. A helical membrane pass occupies residues 484–504 (ILSALTILGMIMASAFLFFNI). The Cytoplasmic portion of the chain corresponds to 505–522 (KNRNQKLIKMSSPYMNNL). Residues 523–543 (IILGGMLSYASIFLFGLDGSF) form a helical membrane-spanning segment. At 544–551 (VSEKTFET) the chain is on the extracellular side. The helical transmembrane segment at 552–572 (LCTVRTWILTVGYTTAFGAMF) threads the bilayer. Over 573-597 (AKTWRVHAIFKNVKMKKKIIKDQKL) the chain is Cytoplasmic. Residues 598 to 618 (LVIVGGMLLIDLCILICWQAV) form a helical membrane-spanning segment. Topologically, residues 619 to 654 (DPLRRTVEKYSMEPDPAGRDISIRPLLEHCENTHMT) are extracellular. A helical transmembrane segment spans residues 655 to 675 (IWLGIVYAYKGLLMLFGCFLA). Topologically, residues 676–691 (WETRNVSIPALNDSKY) are cytoplasmic. A helical membrane pass occupies residues 692–712 (IGMSVYNVGIMCIIGAAVSFL). The Extracellular segment spans residues 713-720 (TRDQPNVQ). Residues 721–741 (FCIVALVIIFCSTITLCLVFV) traverse the membrane as a helical segment. The Cytoplasmic segment spans residues 742–941 (PKLITLRTNP…PSFRVMVSGL (200 aa)). Residues 763-790 (TQNQKKEDSKTSTSVTSVNQASTSRLEG) are disordered. Residues 773–787 (TSTSVTSVNQASTSR) are compositionally biased toward polar residues. Ser776 and Ser779 each carry phosphoserine. Residues 781–819 (NQASTSRLEGLQSENHRLRMKITELDKDLEEVTMQLQDT) are a coiled coil. Residue Thr819 is modified to Phosphothreonine. Residues Ser884, Ser893, Ser913, Ser916, Ser920, and Ser924 each carry the phosphoserine modification.

It belongs to the G-protein coupled receptor 3 family. GABA-B receptor subfamily. As to quaternary structure, heterodimer of GABBR1 and GABBR2. Homodimers may form, but are inactive. Interacts (via C-terminus) with ATF4 (via leucine zipper domain). Highly expressed in brain, especially in cerebral cortex, thalamus, hippocampus, frontal, occipital and temporal lobe, occipital pole and cerebellum, followed by corpus callosum, caudate nucleus, spinal cord, amygdala and medulla. Weakly expressed in heart, testis and skeletal muscle.

It is found in the cell membrane. The protein localises to the postsynaptic cell membrane. Its function is as follows. Component of a heterodimeric G-protein coupled receptor for GABA, formed by GABBR1 and GABBR2. Within the heterodimeric GABA receptor, only GABBR1 seems to bind agonists, while GABBR2 mediates coupling to G proteins. Ligand binding causes a conformation change that triggers signaling via guanine nucleotide-binding proteins (G proteins) and modulates the activity of down-stream effectors, such as adenylate cyclase. Signaling inhibits adenylate cyclase, stimulates phospholipase A2, activates potassium channels, inactivates voltage-dependent calcium-channels and modulates inositol phospholipid hydrolysis. Plays a critical role in the fine-tuning of inhibitory synaptic transmission. Pre-synaptic GABA receptor inhibits neurotransmitter release by down-regulating high-voltage activated calcium channels, whereas postsynaptic GABA receptor decreases neuronal excitability by activating a prominent inwardly rectifying potassium (Kir) conductance that underlies the late inhibitory postsynaptic potentials. Not only implicated in synaptic inhibition but also in hippocampal long-term potentiation, slow wave sleep, muscle relaxation and antinociception. This Homo sapiens (Human) protein is Gamma-aminobutyric acid type B receptor subunit 2 (GABBR2).